Here is a 240-residue protein sequence, read N- to C-terminus: MCTLFIADLHLSEHEPAITAGFLRFLQEQAIHANALYILGDFFDFWIGDDDPNPLHQRIAQALMALKNAGVPCYFIHGNRDFLIGSRFAKESGMTLLPQEKVLEIEQHRILILHGDTLCTDDDAYQRYRKKVHNKFIQRLFLLLPLTIRLRIAKKMRSRSQSSNQYKSEAIMDVNAQAVINTFKQFNTQWMIHGHTHRPAIHTVDIDGKPHYRGVLGAWHTEGSMFKVTSDKIELIQFPF.

Positions 8, 10, 41, 79, and 114 each coordinate Mn(2+). 79 to 80 (NR) provides a ligand contact to substrate. 5 residues coordinate substrate: Asp122, Ser160, Asn164, Lys167, and His195. Mn(2+) is bound by residues His195 and His197.

Belongs to the LpxH family. Mn(2+) serves as cofactor.

The protein resides in the cell inner membrane. It carries out the reaction UDP-2-N,3-O-bis[(3R)-3-hydroxytetradecanoyl]-alpha-D-glucosamine + H2O = 2-N,3-O-bis[(3R)-3-hydroxytetradecanoyl]-alpha-D-glucosaminyl 1-phosphate + UMP + 2 H(+). It participates in glycolipid biosynthesis; lipid IV(A) biosynthesis; lipid IV(A) from (3R)-3-hydroxytetradecanoyl-[acyl-carrier-protein] and UDP-N-acetyl-alpha-D-glucosamine: step 4/6. In terms of biological role, hydrolyzes the pyrophosphate bond of UDP-2,3-diacylglucosamine to yield 2,3-diacylglucosamine 1-phosphate (lipid X) and UMP by catalyzing the attack of water at the alpha-P atom. Involved in the biosynthesis of lipid A, a phosphorylated glycolipid that anchors the lipopolysaccharide to the outer membrane of the cell. The chain is UDP-2,3-diacylglucosamine hydrolase from Proteus mirabilis (strain HI4320).